The following is a 480-amino-acid chain: Aspartyl/glutamyl-tRNA(Asn/Gln) amidotransferase subunit B (480 aa).

Belongs to the GatB/GatE family. GatB subfamily. Heterotrimer of A, B and C subunits.

The enzyme catalyses L-glutamyl-tRNA(Gln) + L-glutamine + ATP + H2O = L-glutaminyl-tRNA(Gln) + L-glutamate + ADP + phosphate + H(+). It catalyses the reaction L-aspartyl-tRNA(Asn) + L-glutamine + ATP + H2O = L-asparaginyl-tRNA(Asn) + L-glutamate + ADP + phosphate + 2 H(+). In terms of biological role, allows the formation of correctly charged Asn-tRNA(Asn) or Gln-tRNA(Gln) through the transamidation of misacylated Asp-tRNA(Asn) or Glu-tRNA(Gln) in organisms which lack either or both of asparaginyl-tRNA or glutaminyl-tRNA synthetases. The reaction takes place in the presence of glutamine and ATP through an activated phospho-Asp-tRNA(Asn) or phospho-Glu-tRNA(Gln). In Streptococcus thermophilus (strain ATCC BAA-491 / LMD-9), this protein is Aspartyl/glutamyl-tRNA(Asn/Gln) amidotransferase subunit B.